The primary structure comprises 340 residues: DNA-directed RNA polymerase subunit alpha (340 aa).

Residues 1 to 233 (MIQNEIPIPA…NLFIPLLHEK (233 aa)) are alpha N-terminal domain (alpha-NTD). An alpha C-terminal domain (alpha-CTD) region spans residues 263-340 (RKEISFKHIF…LPKNKFSIND (78 aa)).

It belongs to the RNA polymerase alpha chain family. In plastids the minimal PEP RNA polymerase catalytic core is composed of four subunits: alpha, beta, beta', and beta''. When a (nuclear-encoded) sigma factor is associated with the core the holoenzyme is formed, which can initiate transcription.

The protein resides in the plastid. The protein localises to the chloroplast. It catalyses the reaction RNA(n) + a ribonucleoside 5'-triphosphate = RNA(n+1) + diphosphate. In terms of biological role, DNA-dependent RNA polymerase catalyzes the transcription of DNA into RNA using the four ribonucleoside triphosphates as substrates. This is DNA-directed RNA polymerase subunit alpha (rpoA) from Anthoceros angustus (Hornwort).